The following is a 1167-amino-acid chain: ATP-dependent helicase/nuclease subunit A (1167 aa).

The region spanning 2-451 is the UvrD-like helicase ATP-binding domain; sequence KNWTAEQMRA…IELSLNFRSR (450 aa). 23-30 provides a ligand contact to ATP; that stretch reads AAAGAGKT. The UvrD-like helicase C-terminal domain maps to 478–768; the sequence is KAFLKKGADY…RVMSVHKSKG (291 aa).

The protein belongs to the helicase family. AddA subfamily. In terms of assembly, heterodimer of AddA and AddB/RexB. Mg(2+) is required as a cofactor.

It catalyses the reaction Couples ATP hydrolysis with the unwinding of duplex DNA by translocating in the 3'-5' direction.. The enzyme catalyses ATP + H2O = ADP + phosphate + H(+). In terms of biological role, the heterodimer acts as both an ATP-dependent DNA helicase and an ATP-dependent, dual-direction single-stranded exonuclease. Recognizes the chi site generating a DNA molecule suitable for the initiation of homologous recombination. The AddA nuclease domain is required for chi fragment generation; this subunit has the helicase and 3' -&gt; 5' nuclease activities. This chain is ATP-dependent helicase/nuclease subunit A, found in Carboxydothermus hydrogenoformans (strain ATCC BAA-161 / DSM 6008 / Z-2901).